The following is a 374-amino-acid chain: DNA replication and repair protein RecF (374 aa).

Glycine 30–threonine 37 contacts ATP.

The protein belongs to the RecF family.

The protein resides in the cytoplasm. In terms of biological role, the RecF protein is involved in DNA metabolism; it is required for DNA replication and normal SOS inducibility. RecF binds preferentially to single-stranded, linear DNA. It also seems to bind ATP. This chain is DNA replication and repair protein RecF, found in Limosilactobacillus reuteri (strain DSM 20016) (Lactobacillus reuteri).